Reading from the N-terminus, the 300-residue chain is Tissue factor pathway inhibitor (300 aa).

The first 24 residues, 1–24, serve as a signal peptide directing secretion; it reads MKKEHIFWTSICLLLGLVPAPVSS. 2 BPTI/Kunitz inhibitor domains span residues 50 to 100 and 121 to 171; these read CAMK…KEKC and CFLE…KNTC. Intrachain disulfides connect C50–C100, C59–C83, C75–C96, C121–C171, C130–C154, and C146–C167. An N-linked (GlcNAc...) asparagine glycan is attached at N141. An N-linked (GlcNAc...) asparagine glycan is attached at N191. The BPTI/Kunitz inhibitor 3 domain occupies 213–263; that stretch reads CLPPADRGLCQANEIRFFYNAIIGKCRPFKYSGCGGNENNFTSKKACITAC. Intrachain disulfides connect C213–C263, C222–C246, and C238–C259. N-linked (GlcNAc...) asparagine glycosylation occurs at N252.

It is found in the secreted. Its function is as follows. Inhibits factor X (X(a)) directly and, in a Xa-dependent way, inhibits VIIa/tissue factor activity, presumably by forming a quaternary Xa/LACI/VIIa/TF complex. It possesses an antithrombotic action and also the ability to associate with lipoproteins in plasma. In Oryctolagus cuniculus (Rabbit), this protein is Tissue factor pathway inhibitor (TFPI).